The following is a 363-amino-acid chain: Aminomethyltransferase (363 aa).

It belongs to the GcvT family. The glycine cleavage system is composed of four proteins: P, T, L and H.

The catalysed reaction is N(6)-[(R)-S(8)-aminomethyldihydrolipoyl]-L-lysyl-[protein] + (6S)-5,6,7,8-tetrahydrofolate = N(6)-[(R)-dihydrolipoyl]-L-lysyl-[protein] + (6R)-5,10-methylene-5,6,7,8-tetrahydrofolate + NH4(+). Its function is as follows. The glycine cleavage system catalyzes the degradation of glycine. The protein is Aminomethyltransferase of Nitrosomonas eutropha (strain DSM 101675 / C91 / Nm57).